A 557-amino-acid chain; its full sequence is Dihydroxy-acid dehydratase (557 aa).

Asp78 contacts Mg(2+). Cys119 serves as a coordination point for [2Fe-2S] cluster. Mg(2+) contacts are provided by Asp120 and Lys121. The residue at position 121 (Lys121) is an N6-carboxylysine. Cys192 is a binding site for [2Fe-2S] cluster. Glu442 contacts Mg(2+). Ser468 acts as the Proton acceptor in catalysis.

Belongs to the IlvD/Edd family. Homodimer. [2Fe-2S] cluster is required as a cofactor. Mg(2+) serves as cofactor.

The catalysed reaction is (2R)-2,3-dihydroxy-3-methylbutanoate = 3-methyl-2-oxobutanoate + H2O. The enzyme catalyses (2R,3R)-2,3-dihydroxy-3-methylpentanoate = (S)-3-methyl-2-oxopentanoate + H2O. The protein operates within amino-acid biosynthesis; L-isoleucine biosynthesis; L-isoleucine from 2-oxobutanoate: step 3/4. It participates in amino-acid biosynthesis; L-valine biosynthesis; L-valine from pyruvate: step 3/4. Functions in the biosynthesis of branched-chain amino acids. Catalyzes the dehydration of (2R,3R)-2,3-dihydroxy-3-methylpentanoate (2,3-dihydroxy-3-methylvalerate) into 2-oxo-3-methylpentanoate (2-oxo-3-methylvalerate) and of (2R)-2,3-dihydroxy-3-methylbutanoate (2,3-dihydroxyisovalerate) into 2-oxo-3-methylbutanoate (2-oxoisovalerate), the penultimate precursor to L-isoleucine and L-valine, respectively. This Bacillus cereus (strain ZK / E33L) protein is Dihydroxy-acid dehydratase.